Here is a 654-residue protein sequence, read N- to C-terminus: Endoplasmic reticulum chaperone BiP (654 aa).

A signal peptide spans 1–18; the sequence is MKLSLVAAVLLLLCAARA. The required for interaction with ELAPOR1 stretch occupies residues 1–80; the sequence is MKLSLVAAVL…EGERLIGDAA (80 aa). 36-39 contacts ATP; that stretch reads GTTY. S86 bears the Phosphoserine mark. K96 contributes to the ATP binding site. At K125 the chain carries N6-acetyllysine. The interval 125–280 is nucleotide-binding (NBD); sequence KPYIQVDIGG…KKKTGKDVRK (156 aa). Y160 carries the post-translational modification 3'-nitrotyrosine. K213 is subject to N6-acetyllysine. Residue 227–229 participates in ATP binding; it reads GGT. Position 271 is an N6-acetyllysine (K271). 293–300 is a binding site for ATP; it reads EKAKRALS. Position 326 is an N6-acetyllysine (K326). K352 participates in a covalent cross-link: Glycyl lysine isopeptide (Lys-Gly) (interchain with G-Cter in SUMO2). The residue at position 353 (K353) is an N6-acetyllysine; alternate. K353 is covalently cross-linked (Glycyl lysine isopeptide (Lys-Gly) (interchain with G-Cter in SUMO1); alternate). Residue 364-367 coordinates ATP; it reads GSTR. An interdomain linker region spans residues 409 to 419; the sequence is QDTGDLVLLDV. The interval 420-500 is substrate-binding (SBD); it reads CPLTLGIETV…PRGVPQIEVT (81 aa). K447 is subject to N6-succinyllysine. R492 is subject to Omega-N-methylarginine. T518 carries the post-translational modification O-AMP-threonine; alternate. At T518 the chain carries Phosphothreonine; alternate. The residue at position 585 (K585) is an N6,N6,N6-trimethyllysine; by METTL21A; in vitro. K585 bears the N6,N6-dimethyllysine; alternate mark. K585 bears the N6-methyllysine; alternate mark. An N6-methyllysine modification is found at K591. Positions 632–654 are disordered; it reads SKLYGSAGPPPTGEEDTSERDEL. Residues T643 and T648 each carry the phosphothreonine modification. A compositionally biased stretch (acidic residues) spans 644-654; sequence GEEDTSERDEL. S649 is modified (phosphoserine). Residues 651–654 carry the Prevents secretion from ER motif; it reads RDEL.

Belongs to the heat shock protein 70 family. As to quaternary structure, monomer and homooligomer; homooligomerization via the interdomain linker inactivates the chaperone activity and acts as a storage of HSPA5/BiP molecules. Interacts with DNAJC1 (via J domain). Component of an EIF2 complex at least composed of CELF1/CUGBP1, CALR, CALR3, EIF2S1, EIF2S2, HSP90B1 and HSPA5. Part of a large chaperone multiprotein complex comprising DNAJB11, HSP90B1, HSPA5, HYOU, PDIA2, PDIA4, PDIA6, PPIB, SDF2L1, UGGT1 and very small amounts of ERP29, but not, or at very low levels, CALR nor CANX. Interacts with TMEM132A and TRIM21. May form a complex with ERLEC1, OS9, SEL1L and SYVN1. Interacts with DNAJC10. Interacts with DNAJB9/ERdj4; leading to recruit HSPA5/BiP to ERN1/IRE1. Interacts with ERN1/IRE1 (via luminal domain); the interaction takes place following interaction with DNAJB9/ERdj4 and leads to inactivate ERN1/IRE1, the interaction also competitively inhibits ERN1 interaction with MANF. Interacts directly with MANF (via SAP domain); the interaction inhibits ATP binding to HSPA5/BiP and subsequent nucleotide exchange. Interacts with EIF2AK3/PERK (via luminal domain); interaction leads to inactivate EIF2AK3/PERK. Interacts with MX1. Interacts with METTL23. Interacts with CEMIP; the interaction induces calcium leakage from the endoplasmic reticulum and cell migration. Interacts with PCSK4 form; the interaction takes place in the endoplasmic reticulum. Interacts with CIPC. Interacts with CCDC88B (via C-terminus); the interaction opposes ERN1-mediated JNK activation, protecting against apoptosis. Interacts with INPP5K; necessary for INPP5K localization at the endoplasmic reticulum. Interacts with MANF; the interaction is direct. Interacts with LOXL2; leading to activate the ERN1/IRE1-XBP1 pathway of the unfolded protein response. Interacts with CLU under stressed condition; interaction increases CLU protein stability; facilitates its retrotranslocation and redistribution to the mitochondria; cooperatively suppress stress-induced apoptosis by stabilizing mitochondrial membrane integrity. Interacts with CCDC47. Interacts with CLN3. Interacts with ELAPOR1; may regulate the function of HSPA5 in apoptosis and cell proliferation. Interacts with CASP7. Interacts with ILDR2; the interaction stabilizes ILDR2 expression. Interacts with ADAM7. In terms of processing, in unstressed cells, AMPylation at Thr-518 by FICD inactivates the chaperome activity: AMPylated form is locked in a relatively inert state and only weakly stimulated by J domain-containing proteins. In response to endoplasmic reticulum stress, de-AMPylation by the same protein, FICD, restores the chaperone activity.

It localises to the endoplasmic reticulum lumen. The protein localises to the melanosome. The protein resides in the cytoplasm. It is found in the cell surface. The enzyme catalyses ATP + H2O = ADP + phosphate + H(+). With respect to regulation, the chaperone activity is regulated by ATP-induced allosteric coupling of the nucleotide-binding (NBD) and substrate-binding (SBD) domains. In the ADP-bound and nucleotide-free (apo) states, the two domains have little interaction. In contrast, in the ATP-bound state the two domains are tightly coupled, which results in drastically accelerated kinetics in both binding and release of polypeptide substrates. J domain-containing co-chaperones (DNAJB9/ERdj4 or DNAJC10/ERdj5) stimulate the ATPase activity and are required for efficient substrate recognition by HSPA5/BiP. Homooligomerization inactivates participating HSPA5/BiP protomers and probably act as reservoirs to store HSPA5/BiP molecules when they are not needed by the cell. Functionally, endoplasmic reticulum chaperone that plays a key role in protein folding and quality control in the endoplasmic reticulum lumen. Involved in the correct folding of proteins and degradation of misfolded proteins via its interaction with DNAJC10/ERdj5, probably to facilitate the release of DNAJC10/ERdj5 from its substrate. Acts as a key repressor of the EIF2AK3/PERK and ERN1/IRE1-mediated unfolded protein response (UPR). In the unstressed endoplasmic reticulum, recruited by DNAJB9/ERdj4 to the luminal region of ERN1/IRE1, leading to disrupt the dimerization of ERN1/IRE1, thereby inactivating ERN1/IRE1. Also binds and inactivates EIF2AK3/PERK in unstressed cells. Accumulation of misfolded protein in the endoplasmic reticulum causes release of HSPA5/BiP from ERN1/IRE1 and EIF2AK3/PERK, allowing their homodimerization and subsequent activation. Plays an auxiliary role in post-translational transport of small presecretory proteins across endoplasmic reticulum (ER). May function as an allosteric modulator for SEC61 channel-forming translocon complex, likely cooperating with SEC62 to enable the productive insertion of these precursors into SEC61 channel. Appears to specifically regulate translocation of precursors having inhibitory residues in their mature region that weaken channel gating. May also play a role in apoptosis and cell proliferation. The polypeptide is Endoplasmic reticulum chaperone BiP (Ictidomys tridecemlineatus (Thirteen-lined ground squirrel)).